The following is a 344-amino-acid chain: Probable glucan endo-1,3-beta-glucosidase At4g16260 (344 aa).

The signal sequence occupies residues 1–21; that stretch reads MTTLFLLIALFITTILNPTSG. E116 serves as the catalytic Proton donor. The Nucleophile role is filled by E257.

This sequence belongs to the glycosyl hydrolase 17 family. In terms of assembly, (Microbial infection) Interacts with the 30C02 effector protein (AC G3GD54) of the beet cyst nematode Heterodera schachtii. Interaction with the 30C02 effector protein may potentially suppress beta-1,3-glucanase activity and plant defense.

The protein localises to the secreted. The enzyme catalyses Hydrolysis of (1-&gt;3)-beta-D-glucosidic linkages in (1-&gt;3)-beta-D-glucans.. In terms of biological role, may be involved in plant defense against cyst nematode pathogens. The protein is Probable glucan endo-1,3-beta-glucosidase At4g16260 of Arabidopsis thaliana (Mouse-ear cress).